The sequence spans 53 residues: Lectin alpha chain (53 aa).

It belongs to the leguminous lectin family. Tetramer of two alpha and two beta chains.

In Lathyrus clymenum (Spanish vetchling), this protein is Lectin alpha chain.